The primary structure comprises 63 residues: DNA-directed RNA polymerase 7 kDa subunit (63 aa).

Belongs to the poxviridae DNA-directed RNA polymerase 7 kDa subunit family. The DNA-dependent RNA polymerase (vRNAP) consists of eight subunits encoded by early viral genes and termed according to their apparent molecular masses Rpo147, Rpo132, Rpo35, Rpo30, Rpo22, Rpo19, Rpo18, and Rpo7. The same holoenzyme, with the addition of the transcription-specificity factor RAP94, is used for early gene expression.

It localises to the virion. The enzyme catalyses RNA(n) + a ribonucleoside 5'-triphosphate = RNA(n+1) + diphosphate. Part of the DNA-dependent RNA polymerase which catalyzes the transcription of viral DNA into RNA using the four ribonucleoside triphosphates as substrates. Responsible for the transcription of early, intermediate and late genes. DNA-dependent RNA polymerase associates with the early transcription factor (ETF), itself composed of OPG118 and OPG134, thereby allowing the early genes transcription. Late transcription, and probably also intermediate transcription, require newly synthesized RNA polymerase. The polypeptide is DNA-directed RNA polymerase 7 kDa subunit (OPG090) (Monkeypox virus).